Reading from the N-terminus, the 1181-residue chain is HEAT repeat-containing protein 6 (1181 aa).

One copy of the HEAT 1 repeat lies at Leu159–Gly198. Disordered stretches follow at residues Asp294–Gly347 and Leu371–Gly407. Positions Lys300–Thr312 are enriched in polar residues. Residues Leu313–Lys325 show a composition bias toward basic residues. Ser336, Ser337, Ser399, and Ser402 each carry phosphoserine. A compositionally biased stretch (low complexity) spans Ser383–Ser399. HEAT repeat units lie at residues Glu452–Gln490, Ser514–Tyr552, and Ser558–Pro595. Residues Asn613–Ser648 are disordered. The residue at position 618 (Thr618) is a Phosphothreonine. Over residues Glu637 to Gly646 the composition is skewed to polar residues. Residue Ser643 is modified to Phosphoserine.

The protein is HEAT repeat-containing protein 6 (HEATR6) of Pongo abelii (Sumatran orangutan).